The following is a 507-amino-acid chain: Cytochrome P450 71A4 (507 aa).

A helical membrane pass occupies residues 3-23 (VPCLWYSLLILLLLFIFLLIH). Heme is bound at residue C448.

This sequence belongs to the cytochrome P450 family. Heme is required as a cofactor.

It localises to the membrane. In terms of biological role, may have a role in maturation, such as during flavor formation or other metabolite production specific to aging tissues. This is Cytochrome P450 71A4 (CYP71A4) from Solanum melongena (Eggplant).